The chain runs to 110 residues: NADH-quinone oxidoreductase subunit K (110 aa).

A run of 3 helical transmembrane segments spans residues 13 to 33 (LNHY…GLFM), 41 to 61 (ILMS…AFSV), and 73 to 93 (IIIL…LLIY).

The protein belongs to the complex I subunit 4L family. NDH-1 is composed of 14 different subunits. Subunits NuoA, H, J, K, L, M, N constitute the membrane sector of the complex.

The protein resides in the cell inner membrane. It carries out the reaction a quinone + NADH + 5 H(+)(in) = a quinol + NAD(+) + 4 H(+)(out). NDH-1 shuttles electrons from NADH, via FMN and iron-sulfur (Fe-S) centers, to quinones in the respiratory chain. The immediate electron acceptor for the enzyme in this species is believed to be ubiquinone. Couples the redox reaction to proton translocation (for every two electrons transferred, four hydrogen ions are translocated across the cytoplasmic membrane), and thus conserves the redox energy in a proton gradient. The polypeptide is NADH-quinone oxidoreductase subunit K (Rickettsia typhi (strain ATCC VR-144 / Wilmington)).